The following is a 612-amino-acid chain: Dihydroxy-acid dehydratase (612 aa).

Asp81 provides a ligand contact to Mg(2+). Cys122 is a [2Fe-2S] cluster binding site. 2 residues coordinate Mg(2+): Asp123 and Lys124. Lys124 is subject to N6-carboxylysine. Residue Cys195 coordinates [2Fe-2S] cluster. Glu491 provides a ligand contact to Mg(2+). Ser517 serves as the catalytic Proton acceptor.

This sequence belongs to the IlvD/Edd family. As to quaternary structure, homodimer. [2Fe-2S] cluster serves as cofactor. Mg(2+) is required as a cofactor.

The catalysed reaction is (2R)-2,3-dihydroxy-3-methylbutanoate = 3-methyl-2-oxobutanoate + H2O. It catalyses the reaction (2R,3R)-2,3-dihydroxy-3-methylpentanoate = (S)-3-methyl-2-oxopentanoate + H2O. It functions in the pathway amino-acid biosynthesis; L-isoleucine biosynthesis; L-isoleucine from 2-oxobutanoate: step 3/4. It participates in amino-acid biosynthesis; L-valine biosynthesis; L-valine from pyruvate: step 3/4. Functionally, functions in the biosynthesis of branched-chain amino acids. Catalyzes the dehydration of (2R,3R)-2,3-dihydroxy-3-methylpentanoate (2,3-dihydroxy-3-methylvalerate) into 2-oxo-3-methylpentanoate (2-oxo-3-methylvalerate) and of (2R)-2,3-dihydroxy-3-methylbutanoate (2,3-dihydroxyisovalerate) into 2-oxo-3-methylbutanoate (2-oxoisovalerate), the penultimate precursor to L-isoleucine and L-valine, respectively. In Sinorhizobium fredii (strain NBRC 101917 / NGR234), this protein is Dihydroxy-acid dehydratase.